The chain runs to 393 residues: MFRYLTAGESHGPQLTAIIEGIPAGLSLSEEQINIDLARRQCGYGRGGRMLIEKDQVEILSGVRWGKTIGSPITLCVRNRDWENWHEKMSPHERFHDDKIRVTRSRPGHADLPGAMKYNHHDVRNILERSSARETAVRVAVGAVAKALLSQFEIEVCGFVAELGGIKAIRPSLPLAALKDMAAKSELFTYDKSVEEEMKRLIDTVRDEGDTVGGVIEVNAVGVPPGLGSHVQWDRKLDARLAMAVLSIQAFKGVEIGIGFQAAASTGSKVHDEIFYDSARIAHGEQSGFYRKSNNAGGIEGGISNGEEIVVRAAMKPIPTLYKPLRSVDIVSKEPYEATVERSDVCAVPAASVVAEAVVAIELADAFMVKFGGDSITEIKRNYQSYLDYLRAF.

NADP(+)-binding residues include arginine 40 and arginine 46. Residues 129 to 131 (RSS), 249 to 250 (QA), glycine 301, 316 to 320 (KPIPT), and arginine 342 contribute to the FMN site.

The protein belongs to the chorismate synthase family. In terms of assembly, homotetramer. FMNH2 serves as cofactor.

It carries out the reaction 5-O-(1-carboxyvinyl)-3-phosphoshikimate = chorismate + phosphate. It participates in metabolic intermediate biosynthesis; chorismate biosynthesis; chorismate from D-erythrose 4-phosphate and phosphoenolpyruvate: step 7/7. Its function is as follows. Catalyzes the anti-1,4-elimination of the C-3 phosphate and the C-6 proR hydrogen from 5-enolpyruvylshikimate-3-phosphate (EPSP) to yield chorismate, which is the branch point compound that serves as the starting substrate for the three terminal pathways of aromatic amino acid biosynthesis. This reaction introduces a second double bond into the aromatic ring system. This chain is Chorismate synthase, found in Geotalea uraniireducens (strain Rf4) (Geobacter uraniireducens).